The primary structure comprises 299 residues: Acetylglutamate kinase (299 aa).

Substrate is bound by residues 68–69, Arg90, and Asn195; that span reads GG.

This sequence belongs to the acetylglutamate kinase family. ArgB subfamily.

It localises to the cytoplasm. It catalyses the reaction N-acetyl-L-glutamate + ATP = N-acetyl-L-glutamyl 5-phosphate + ADP. The protein operates within amino-acid biosynthesis; L-arginine biosynthesis; N(2)-acetyl-L-ornithine from L-glutamate: step 2/4. Its function is as follows. Catalyzes the ATP-dependent phosphorylation of N-acetyl-L-glutamate. The protein is Acetylglutamate kinase of Erythrobacter litoralis (strain HTCC2594).